The sequence spans 815 residues: MSEVERTTTIPDEIAILPLLGTVAYPQTIMPLAIGQPESIRLIDDLMAGQRIVGLMALKNEDERPNPVLPEDFYQLGSAAVVHKLMKLPDGTLRAAMQVLERIEIVEIIQTEPYYRAKIRVMPDALAESEQLEVTALMRSIGTIASQIAPLIPQFPTELLNSVLSEEDPRRLAYLVASYARMSVTDRQAVLAEPSIKQKLLKLNEVLTRELNVLQIGQQIQSQVQDEMSKTQREYVLREQLKAIRKELGENNEQEVEVDRLAEQIEAAGMSAEAHQQAMRELDRLRQMPTAAAEYSVIRGYLETLIALPWQKRSDDTIDVAQATEVLDADHYGLDEIKERILDYLAVRELRRKRSPERDPGRGAILCFVGPPGVGKTSLGRSIAKAMNREFVRLSLGGVHDEAEIRGHRRTYIGAMPGSLIQAIRRSGVNNPVVLLDEIDKLSSDHRGDPTSAMLEVLDPAQNTNFRDHYLDVAWDLSPVMFIATANTLQTIPAPLRDRLEIIQLGSYTMREKYEIASRYLVPEQREQHSLAPNEVEIDHEALLVAIEEYTREAGVRNLEQQIGTLMRKAARQVALGSATPIVLDPAKTREYLGKRRYFSEIHERTDRPGIVTGLVWTPVGGDIIFIEATKMTGRGNFALSGQLGDVMKESARAALSWVRAEGEAYGIDPNFAQHYDLHVHVPAGAQPKDGPSAGIAMATALVSLLTGRVLRDDVAMTGEITLRGKVLPIGGVREKVLAAHRAGIRTIILPQRNLADLDEIPADVLAEVQFHGVEHVGQVIELALRAEASEAPVSVPESAVMPNLFQSDVEVLVH.

Residues 14–211 form the Lon N-terminal domain; it reads IAILPLLGTV…KLNEVLTREL (198 aa). 370-377 contributes to the ATP binding site; that stretch reads GPPGVGKT. In terms of domain architecture, Lon proteolytic spans 606 to 787; that stretch reads TDRPGIVTGL…GQVIELALRA (182 aa). Residues S693 and K736 contribute to the active site.

This sequence belongs to the peptidase S16 family. In terms of assembly, homohexamer. Organized in a ring with a central cavity.

It localises to the cytoplasm. The enzyme catalyses Hydrolysis of proteins in presence of ATP.. Its function is as follows. ATP-dependent serine protease that mediates the selective degradation of mutant and abnormal proteins as well as certain short-lived regulatory proteins. Required for cellular homeostasis and for survival from DNA damage and developmental changes induced by stress. Degrades polypeptides processively to yield small peptide fragments that are 5 to 10 amino acids long. Binds to DNA in a double-stranded, site-specific manner. The sequence is that of Lon protease 1 from Herpetosiphon aurantiacus (strain ATCC 23779 / DSM 785 / 114-95).